The chain runs to 510 residues: Inositol-3-phosphate synthase (510 aa).

Residues Gly-70, Gly-71, Asn-72, Asn-73, Asp-143, Ile-180, Gln-190, Arg-193, Thr-230, Ala-231, Asn-232, Thr-233, Gly-281, Ser-282, Asp-306, Ser-309, Asn-340, Asn-341, Asp-342, Lys-355, Gly-393, Asp-394, Asp-422, and Ser-423 each contribute to the NAD(+) site.

This sequence belongs to the myo-inositol 1-phosphate synthase family. It depends on NAD(+) as a cofactor.

It is found in the cytoplasm. The protein localises to the cytosol. Its subcellular location is the nucleus. It carries out the reaction D-glucose 6-phosphate = 1D-myo-inositol 3-phosphate. It functions in the pathway polyol metabolism; myo-inositol biosynthesis; myo-inositol from D-glucose 6-phosphate: step 1/2. Key enzyme in myo-inositol biosynthesis pathway that catalyzes the conversion of glucose 6-phosphate to 1-myo-inositol 1-phosphate in a NAD-dependent manner. In Nicotiana paniculata, this protein is Inositol-3-phosphate synthase (INPS1).